Consider the following 336-residue polypeptide: HTH-type transcriptional repressor PurR (336 aa).

The HTH lacI-type domain occupies 2 to 56; it reads ATIKDVAKMAGVSTTTVSHVINKTRFVAKDTEEAVLSAIKQLNYSPSAVARSLKV. The H-T-H motif DNA-binding region spans 4-23; sequence IKDVAKMAGVSTTTVSHVIN. Residues 48-56 mediate DNA binding; that stretch reads SAVARSLKV. Hypoxanthine contacts are provided by Tyr73, Lys188, Thr190, Phe219, and Asp273.

Homodimer.

The protein operates within purine metabolism; purine nucleotide biosynthesis [regulation]. Its function is as follows. Is the main repressor of the genes involved in the de novo synthesis of purine nucleotides, regulating purB, purC, purEK, purF, purHD, purL, purMN and guaBA expression. PurR is allosterically activated to bind its cognate DNA by binding the purine corepressors, hypoxanthine or guanine, thereby effecting transcription repression. The polypeptide is HTH-type transcriptional repressor PurR (Haemophilus influenzae (strain PittGG)).